Here is a 90-residue protein sequence, read N- to C-terminus: Mitochondrial import inner membrane translocase subunit Tim10 (90 aa).

A Twin CX3C motif motif is present at residues Cys29–Cys54. Cystine bridges form between Cys29/Cys54 and Cys33/Cys50.

This sequence belongs to the small Tim family. As to quaternary structure, heterohexamer; composed of 3 copies of TIMM9 and 3 copies of TIMM10/TIM10A, named soluble 70 kDa complex. The complex forms a 6-bladed alpha-propeller structure and associates with the TIMM22 component of the TIM22 complex. Interacts with multi-pass transmembrane proteins in transit. Also forms a complex composed of TIMM9, TIMM10/TIM10A and FXC1/TIM10B.

The protein localises to the mitochondrion inner membrane. Its function is as follows. Mitochondrial intermembrane chaperone that participates in the import and insertion of multi-pass transmembrane proteins into the mitochondrial inner membrane. May also be required for the transfer of beta-barrel precursors from the TOM complex to the sorting and assembly machinery (SAM complex) of the outer membrane. Acts as a chaperone-like protein that protects the hydrophobic precursors from aggregation and guide them through the mitochondrial intermembrane space. This Rattus norvegicus (Rat) protein is Mitochondrial import inner membrane translocase subunit Tim10 (Timm10).